Consider the following 188-residue polypeptide: UPF0157 protein VC_A0354 (188 aa).

This sequence belongs to the UPF0157 (GrpB) family.

This Vibrio cholerae serotype O1 (strain ATCC 39315 / El Tor Inaba N16961) protein is UPF0157 protein VC_A0354.